A 343-amino-acid chain; its full sequence is tRNA N6-adenosine threonylcarbamoyltransferase (343 aa).

2 residues coordinate Fe cation: His-116 and His-120. Substrate contacts are provided by residues 139–143 (TVSGG), Asp-172, Gly-185, Asp-189, and Asn-280. Asp-308 provides a ligand contact to Fe cation.

Belongs to the KAE1 / TsaD family. The cofactor is Fe(2+).

It is found in the cytoplasm. The enzyme catalyses L-threonylcarbamoyladenylate + adenosine(37) in tRNA = N(6)-L-threonylcarbamoyladenosine(37) in tRNA + AMP + H(+). Functionally, required for the formation of a threonylcarbamoyl group on adenosine at position 37 (t(6)A37) in tRNAs that read codons beginning with adenine. Is involved in the transfer of the threonylcarbamoyl moiety of threonylcarbamoyl-AMP (TC-AMP) to the N6 group of A37, together with TsaE and TsaB. TsaD likely plays a direct catalytic role in this reaction. In Cytophaga hutchinsonii (strain ATCC 33406 / DSM 1761 / CIP 103989 / NBRC 15051 / NCIMB 9469 / D465), this protein is tRNA N6-adenosine threonylcarbamoyltransferase.